We begin with the raw amino-acid sequence, 342 residues long: Holliday junction branch migration complex subunit RuvB (342 aa).

Residues 1 to 179 are large ATPase domain (RuvB-L); it reads MTSILSPEKS…FGIPMRLNFY (179 aa). Residues L18, R19, G60, K63, T64, T65, 126–128, R169, Y179, and R216 contribute to the ATP site; that span reads EDF. T64 serves as a coordination point for Mg(2+). Residues 180–250 are small ATPAse domain (RuvB-S); it reads NTEELKKVLN…IANFGLNRLE (71 aa). The tract at residues 253-342 is head domain (RuvB-H); that stretch reads IIGLDSNDYR…HQFNIFNDNE (90 aa). DNA is bound by residues R289, R308, and R313.

Belongs to the RuvB family. Homohexamer. Forms an RuvA(8)-RuvB(12)-Holliday junction (HJ) complex. HJ DNA is sandwiched between 2 RuvA tetramers; dsDNA enters through RuvA and exits via RuvB. An RuvB hexamer assembles on each DNA strand where it exits the tetramer. Each RuvB hexamer is contacted by two RuvA subunits (via domain III) on 2 adjacent RuvB subunits; this complex drives branch migration. In the full resolvosome a probable DNA-RuvA(4)-RuvB(12)-RuvC(2) complex forms which resolves the HJ.

The protein resides in the cytoplasm. The enzyme catalyses ATP + H2O = ADP + phosphate + H(+). The RuvA-RuvB-RuvC complex processes Holliday junction (HJ) DNA during genetic recombination and DNA repair, while the RuvA-RuvB complex plays an important role in the rescue of blocked DNA replication forks via replication fork reversal (RFR). RuvA specifically binds to HJ cruciform DNA, conferring on it an open structure. The RuvB hexamer acts as an ATP-dependent pump, pulling dsDNA into and through the RuvAB complex. RuvB forms 2 homohexamers on either side of HJ DNA bound by 1 or 2 RuvA tetramers; 4 subunits per hexamer contact DNA at a time. Coordinated motions by a converter formed by DNA-disengaged RuvB subunits stimulates ATP hydrolysis and nucleotide exchange. Immobilization of the converter enables RuvB to convert the ATP-contained energy into a lever motion, pulling 2 nucleotides of DNA out of the RuvA tetramer per ATP hydrolyzed, thus driving DNA branch migration. The RuvB motors rotate together with the DNA substrate, which together with the progressing nucleotide cycle form the mechanistic basis for DNA recombination by continuous HJ branch migration. Branch migration allows RuvC to scan DNA until it finds its consensus sequence, where it cleaves and resolves cruciform DNA. The chain is Holliday junction branch migration complex subunit RuvB from Rickettsia bellii (strain RML369-C).